The sequence spans 256 residues: Pimeloyl-[acyl-carrier protein] methyl ester esterase (256 aa).

The region spanning 15-242 (HLVLLHGWGL…AAHAPFISHP (228 aa)) is the AB hydrolase-1 domain. Substrate is bound by residues Trp-22, 82–83 (SL), and 143–147 (FLALQ). The active-site Nucleophile is the Ser-82. Active-site residues include Asp-207 and His-235. His-235 serves as a coordination point for substrate.

This sequence belongs to the AB hydrolase superfamily. Carboxylesterase BioH family. As to quaternary structure, monomer.

Its subcellular location is the cytoplasm. It catalyses the reaction 6-carboxyhexanoyl-[ACP] methyl ester + H2O = 6-carboxyhexanoyl-[ACP] + methanol + H(+). Its pathway is cofactor biosynthesis; biotin biosynthesis. Functionally, the physiological role of BioH is to remove the methyl group introduced by BioC when the pimeloyl moiety is complete. It allows to synthesize pimeloyl-ACP via the fatty acid synthetic pathway through the hydrolysis of the ester bonds of pimeloyl-ACP esters. In Escherichia coli O81 (strain ED1a), this protein is Pimeloyl-[acyl-carrier protein] methyl ester esterase.